A 471-amino-acid chain; its full sequence is UDP-N-acetylmuramate--L-alanine ligase (471 aa).

114–120 provides a ligand contact to ATP; sequence GTHGKTT.

This sequence belongs to the MurCDEF family.

It localises to the cytoplasm. The enzyme catalyses UDP-N-acetyl-alpha-D-muramate + L-alanine + ATP = UDP-N-acetyl-alpha-D-muramoyl-L-alanine + ADP + phosphate + H(+). It functions in the pathway cell wall biogenesis; peptidoglycan biosynthesis. Its function is as follows. Cell wall formation. The chain is UDP-N-acetylmuramate--L-alanine ligase from Agrobacterium fabrum (strain C58 / ATCC 33970) (Agrobacterium tumefaciens (strain C58)).